Consider the following 324-residue polypeptide: Porphobilinogen deaminase 1 (324 aa).

Cys249 carries the post-translational modification S-(dipyrrolylmethanemethyl)cysteine.

The protein belongs to the HMBS family. As to quaternary structure, monomer. The cofactor is dipyrromethane.

It carries out the reaction 4 porphobilinogen + H2O = hydroxymethylbilane + 4 NH4(+). It participates in porphyrin-containing compound metabolism; protoporphyrin-IX biosynthesis; coproporphyrinogen-III from 5-aminolevulinate: step 2/4. In terms of biological role, tetrapolymerization of the monopyrrole PBG into the hydroxymethylbilane pre-uroporphyrinogen in several discrete steps. The sequence is that of Porphobilinogen deaminase 1 (hemC1) from Streptomyces avermitilis (strain ATCC 31267 / DSM 46492 / JCM 5070 / NBRC 14893 / NCIMB 12804 / NRRL 8165 / MA-4680).